We begin with the raw amino-acid sequence, 458 residues long: Protein unc-93 homolog A (458 aa).

5 consecutive transmembrane segments (helical) span residues V8–L28, T42–I62, W69–N89, W90–A110, and I140–F160. A glycan (N-linked (GlcNAc...) asparagine) is linked at N190. The next 7 membrane-spanning stretches (helical) occupy residues T202–L222, L258–L275, C286–L306, A321–W341, T345–W365, L390–T410, and L412–L432.

This sequence belongs to the unc-93 family.

The protein localises to the cell membrane. This Mus musculus (Mouse) protein is Protein unc-93 homolog A (Unc93a).